The chain runs to 133 residues: MQRVTITLDDDLLETLDSLSQRRGYNNRSEAIRDILRGALAQEATQEHGTYGFAVLSYVYEHEKRDLASRIVSTQHHHHELSVATLHVHINHDDCLEIAVLKGDMGDVQHFADDVIAQRGVRHGHLQCLPKED.

Ni(2+) is bound by residues histidine 76, histidine 87, histidine 89, and cysteine 95.

The protein belongs to the transcriptional regulatory CopG/NikR family. Homotetramer. The cofactor is Ni(2+).

In terms of biological role, transcriptional repressor of the nikABCDE operon. Is active in the presence of excessive concentrations of intracellular nickel. This is Nickel-responsive regulator from Salmonella arizonae (strain ATCC BAA-731 / CDC346-86 / RSK2980).